The chain runs to 211 residues: B3 domain-containing protein At5g42700 (211 aa).

The TF-B3 DNA-binding region spans 110–201 (FVKSMLQSHV…AFKVYITRVG (92 aa)).

The protein localises to the nucleus. The protein is B3 domain-containing protein At5g42700 of Arabidopsis thaliana (Mouse-ear cress).